An 81-amino-acid chain; its full sequence is Costars family protein ABRACL (81 aa).

Met1 bears the N-acetylmethionine mark.

This sequence belongs to the costars family.

In Mus musculus (Mouse), this protein is Costars family protein ABRACL (Abracl).